Here is a 526-residue protein sequence, read N- to C-terminus: Acid-sensing ion channel 1 (526 aa).

The Cytoplasmic segment spans residues 1–49 (MELKTEEEEVGGVQPVSIQAFASSSTLHGLAHIFSYERLSLKRALWALC). The chain crosses the membrane as a helical span at residues 50–66 (FLGSLAVLLCVCTERVQ). The Extracellular portion of the chain corresponds to 67 to 425 (YYFCYHHVTK…ETIEQKKAYE (359 aa)). 7 disulfide bridges follow: C93/C194, C172/C179, C290/C365, C308/C361, C312/C359, C321/C343, and C323/C335. Residues N366 and N393 are each glycosylated (N-linked (GlcNAc...) asparagine). A discontinuously helical membrane pass occupies residues 426–456 (IAGLLGDIGGQMGLFIGASILTVLELFDYAY). The GAS motif; ion selectivity filter signature appears at 442–444 (GAS). The Cytoplasmic segment spans residues 457-526 (EVIKHRLCRR…ARGTFEDFTC (70 aa)). S477 and S497 each carry phosphoserine.

The protein belongs to the amiloride-sensitive sodium channel (TC 1.A.6) family. ASIC1 subfamily. Homotrimer. Heterotrimer; with other ASIC proteins producing channel with different properties. Interacts with PICK1; regulates ASIC1 clustering in membranes. Interacts with STOM; alters heterotrimeric ASIC channels activity. In terms of processing, pH-gating could be regulated by serine proteases. Post-translationally, phosphorylation by PKA regulates interaction with PICK1 and subcellular localization. Phosphorylation by PKC may regulate the channel. Expressed in dorsal root ganglia and sciatic nerve (at protein level). Widely distributed throughout the brain. Expressed in olfactory bulb, neo and allocortical regions, dentate granule cells, pyramidal cells of CA1-CA3 subfields of the hippocampal formation, habenula, basolateral amygdaloid nuclei, and in the Purkinje and granule cells of the cerebellum. Diffusely detected over most other regions of the basal ganglia, including thalamic nuclei, substantia nigra, striatum and globus pallidus, hypothalamus, midbrain, pons, medulla and choroid plexus. As to expression, expressed only in dorsal root ganglion (DRG). In terms of tissue distribution, expressed exclusively in trigeminal ganglion and dorsal root ganglion.

It localises to the cell membrane. The protein localises to the postsynaptic cell membrane. Its subcellular location is the cell projection. The protein resides in the dendrite. The enzyme catalyses Na(+)(in) = Na(+)(out). The catalysed reaction is Li(+)(in) = Li(+)(out). It catalyses the reaction K(+)(in) = K(+)(out). It carries out the reaction Ca(2+)(in) = Ca(2+)(out). The enzyme catalyses H(+)(in) = H(+)(out). With respect to regulation, inhibited by the diuretic drug amiloride. External calcium is required to potentiate proton activation of ASIC1 at physiological concentrations, but at higher, non-physiological concentrations, it inhibits activation. Also potentiated by other multivalent cations like Mg(2+), Ba(2+). Activated by FMRFamide-related neuropeptides. Inhibited by anti-inflammatory drugs like salicylic acid. The spider venom psalmotoxin-1 specifically inhibits the ASIC1 homotrimer. The snake venom mambalgin-1, mambalgin-2 and mambalgin-3 inhibit the homotrimer of Asic1a (ASIC1 isoform 1). The snake venom mambalgin-1 and mambalgin-2 inhibit heterotrimers of Asic1a-Asic1b (ASIC1 isoform 1-ASIC1 isoform 3). Heterotrimer of Asic1a-Asic2a is inhibited by the snake venom mambalgin-1, mambalgin-2 and mambalgin-3. Heterotrimer of Asic1a-Asic2b is inhibited by the snake venom mambalgin-1 and mambalgin-2. The spider venom Pi-theraphotoxin-Hm3a inhibits the homotrimer of Asic1a (ASIC1 isoform 1). The spider venom Pi-theraphotoxin-Hm3a inhibits heterotrimers of Asic1a-Asic1b (ASIC1 isoform 1-ASIC1 isoform 3). The spider venom Pi-hexatoxin-Hi1a inhibits the ASIC1 homotrimer. Its activity is regulated as follows. Not inhibited by extracellular calcium. Its function is as follows. Forms voltage-independent, pH-gated trimeric sodium channels that act as postsynaptic excitatory receptors in the nervous system, playing a crucial role in regulating synaptic plasticity, learning, and memory. Upon extracellular pH drop this channel elicits transient, fast activating, and completely desensitizing inward currents. Displays high selectivity for sodium ions but can also permit the permeation of other cations. Regulates more or less directly intracellular calcium concentration and CaMKII phosphorylation, and thereby the density of dendritic spines. Modulates neuronal activity in the circuits underlying innate fear. In terms of biological role, permeable to other cations including calcium, lithium and potassium. Functionally, pH activation and steady-state inactivation are shifted to more acidic values. Forms channels that are not permeable to calcium as it discrimates stronger between monovalent cations. Has no pH-gated sodium channel activity per se but can associate with other ASICs and regulate their pH-sensitivity. The protein is Acid-sensing ion channel 1 of Rattus norvegicus (Rat).